Consider the following 433-residue polypeptide: Xylose isomerase (433 aa).

Active-site residues include histidine 97 and aspartate 100. 7 residues coordinate Mg(2+): glutamate 228, glutamate 264, histidine 267, aspartate 292, aspartate 303, aspartate 305, and aspartate 334.

Belongs to the xylose isomerase family. Homotetramer. The cofactor is Mg(2+).

The protein localises to the cytoplasm. The enzyme catalyses alpha-D-xylose = alpha-D-xylulofuranose. This Fervidobacterium gondwanense protein is Xylose isomerase.